Reading from the N-terminus, the 231-residue chain is MQSKILIIEDDHAITHLLDVALTLDYYNVTTADNATQAHFKIQIDKPDVILLDLGLPDKDGLCLISEIRQHTDIPIIVISARQEEQTIIQALDNGANDYMTKPFNVDELRARIRVIERIAKSHQETNIVFTNGLLSIDFGSKSVVINNQEVHLTPNEFSLLELLSNHKGKVLTYEMILKRIYGYVNKTEMPSLRVHMTSLRQKLSQCHEDAKDIIKTHPRIGYQMLQWKEK.

A Response regulatory domain is found at 4–117 (KILIIEDDHA…ELRARIRVIE (114 aa)). Position 53 is a 4-aspartylphosphate (aspartate 53). Positions 127 to 227 (NIVFTNGLLS…HPRIGYQMLQ (101 aa)) form a DNA-binding region, ompR/PhoB-type.

In terms of processing, phosphorylated by KdpD. Phosphorylation is required for transcriptional activity.

Member of the two-component regulatory system KdpD/KdpE that regulates the transcription of a series of virulence factors through sensing external K(+) concentrations. Also regulates capsular polysaccharide synthesis. Upon phosphorylation by KpdD, functions as a transcriptional regulator by direct binding to promoter regions of target genes including spa, hla, aur and geh. Represses the transcription of kdpFABC operon. In Staphylococcus aureus (strain NCTC 8325 / PS 47), this protein is Transcriptional regulatory protein KdpE.